The chain runs to 472 residues: Uronate isomerase (472 aa).

The protein belongs to the metallo-dependent hydrolases superfamily. Uronate isomerase family.

The enzyme catalyses D-glucuronate = D-fructuronate. The catalysed reaction is aldehydo-D-galacturonate = keto-D-tagaturonate. Its pathway is carbohydrate metabolism; pentose and glucuronate interconversion. This chain is Uronate isomerase, found in Xanthomonas oryzae pv. oryzae (strain MAFF 311018).